Here is a 224-residue protein sequence, read N- to C-terminus: Orotate phosphoribosyltransferase (224 aa).

Residue Lys29 participates in 5-phospho-alpha-D-ribose 1-diphosphate binding. Phe37–Phe38 provides a ligand contact to orotate. Residues Tyr75–Lys76, Arg105, Lys106, Lys109, His111, and Asp130–Ser138 each bind 5-phospho-alpha-D-ribose 1-diphosphate. Orotate contacts are provided by Thr134 and Arg162.

This sequence belongs to the purine/pyrimidine phosphoribosyltransferase family. PyrE subfamily. As to quaternary structure, homodimer. The cofactor is Mg(2+).

The catalysed reaction is orotidine 5'-phosphate + diphosphate = orotate + 5-phospho-alpha-D-ribose 1-diphosphate. Its pathway is pyrimidine metabolism; UMP biosynthesis via de novo pathway; UMP from orotate: step 1/2. Functionally, catalyzes the transfer of a ribosyl phosphate group from 5-phosphoribose 1-diphosphate to orotate, leading to the formation of orotidine monophosphate (OMP). This chain is Orotate phosphoribosyltransferase, found in Bordetella parapertussis (strain 12822 / ATCC BAA-587 / NCTC 13253).